Reading from the N-terminus, the 310-residue chain is tRNA-cytidine(32) 2-sulfurtransferase (310 aa).

The PP-loop motif signature appears at 45-50 (SGGKDS). Positions 120, 123, and 211 each coordinate [4Fe-4S] cluster.

It belongs to the TtcA family. As to quaternary structure, homodimer. Requires Mg(2+) as cofactor. It depends on [4Fe-4S] cluster as a cofactor.

It localises to the cytoplasm. It catalyses the reaction cytidine(32) in tRNA + S-sulfanyl-L-cysteinyl-[cysteine desulfurase] + AH2 + ATP = 2-thiocytidine(32) in tRNA + L-cysteinyl-[cysteine desulfurase] + A + AMP + diphosphate + H(+). It functions in the pathway tRNA modification. Catalyzes the ATP-dependent 2-thiolation of cytidine in position 32 of tRNA, to form 2-thiocytidine (s(2)C32). The sulfur atoms are provided by the cysteine/cysteine desulfurase (IscS) system. The protein is tRNA-cytidine(32) 2-sulfurtransferase of Shewanella baltica (strain OS195).